Here is a 173-residue protein sequence, read N- to C-terminus: Endoribonuclease YbeY (173 aa).

Zn(2+) is bound by residues His126, His130, and His136.

Belongs to the endoribonuclease YbeY family. The cofactor is Zn(2+).

The protein resides in the cytoplasm. Its function is as follows. Single strand-specific metallo-endoribonuclease involved in late-stage 70S ribosome quality control and in maturation of the 3' terminus of the 16S rRNA. The polypeptide is Endoribonuclease YbeY (Sinorhizobium fredii (strain NBRC 101917 / NGR234)).